A 2779-amino-acid polypeptide reads, in one-letter code: Protein lava lamp (2779 aa).

Disordered regions lie at residues 31–62 (LAGS…DSLK), 79–98 (ALRK…SMES), and 110–135 (KTRS…VSLL). Positions 33–51 (GSSNDLSSLQNVSASTTRG) are enriched in polar residues. A phosphoserine mark is found at S34 and S35. Residues 52 to 85 (TKGKGRLDSLKENLYKQQERLTALKERALRKSQD) are a coiled coil. Residues 79 to 91 (ALRKSQDERHKSS) show a composition bias toward basic and acidic residues. S95, S98, S122, and S133 each carry phosphoserine. Residues 141 to 175 (EKLLMLTQRTEQNRALLEQRKRDLAKSLLSVKSNI) are a coiled coil. Phosphoserine occurs at positions 186, 352, and 354. Coiled-coil stretches lie at residues 220 to 607 (ESRV…AESI) and 659 to 716 (GETL…KDLI). Positions 337-352 (ERQRNLELEQEQEKAS) are enriched in basic and acidic residues. Disordered regions lie at residues 337-366 (ERQR…DAQV), 622-662 (RPAS…GETL), 711-730 (REKD…QELS), and 1716-1753 (QAQL…GGDA). Low complexity-rich tracts occupy residues 717-730 (SSTS…QELS) and 1716-1740 (QAQL…QSQQ). Coiled coils occupy residues 751–1733 (LFEK…QHHH), 1785–1863 (TIED…KLIQ), and 1941–2433 (NEAP…QSQN). Disordered regions lie at residues 2348–2367 (EDKE…GETV), 2484–2507 (EEVT…EATS), 2552–2578 (NRGG…TANE), and 2633–2665 (TERS…AGSN). Over residues 2488–2502 (QQQQRELPQSQQSTQ) the composition is skewed to low complexity. A coiled-coil region spans residues 2504–2544 (EATSDIMQKMQKALETQEMEIVTLKEQLAIRSAEYARLAAQ). The stretch at 2600-2641 (DMRVEEMIVELVQLLEERDHLQLKLSDTLRQLETERSRVSDE) forms a coiled coil. Low complexity predominate over residues 2643-2665 (SATASSSAASSSSPSKISSAGSN).

As to quaternary structure, interacts with CLIP-190 and spectrin separately.

It localises to the golgi apparatus. Its subcellular location is the cytoplasmic vesicle. It is found in the autophagosome. Its function is as follows. Lva and spectrin may form a Golgi-based scaffold that mediates interaction of Golgi bodies with microtubules and facilitates Golgi-derived membrane secretion required for the formation of furrows during cellularization. Under starvation conditions recruited by ema to developing autophagsosomes where it may function in autophagosome growth. The sequence is that of Protein lava lamp (lva) from Drosophila melanogaster (Fruit fly).